The following is a 274-amino-acid chain: TIP41-like protein (274 aa).

Belongs to the TIP41 family.

The chain is TIP41-like protein (tiprl) from Dictyostelium discoideum (Social amoeba).